The chain runs to 446 residues: Enolase (446 aa).

Residue serine 42 coordinates Mg(2+). A Phosphoserine modification is found at serine 42. The short motif at 104 to 108 (EWGWS) is the Pentapeptide insert element. N6-acetyllysine is present on lysine 133. A Glycyl lysine isopeptide (Lys-Gly) (interchain with G-Cter in ubiquitin) cross-link involves residue lysine 138. Position 139 is a phosphotyrosine (tyrosine 139). Histidine 166 and glutamate 175 together coordinate substrate. Glutamate 218 serves as the catalytic Proton donor. Aspartate 253 provides a ligand contact to Mg(2+). The DKSLVK motif signature appears at 277-282 (DKSLVK). Mg(2+)-binding residues include glutamate 304 and aspartate 331. Substrate is bound by residues glutamate 304 and aspartate 331. At threonine 339 the chain carries Phosphothreonine. The active-site Proton acceptor is the lysine 356. Lysine 375 carries the post-translational modification N6-acetyllysine. Substrate-binding positions include 383–386 (SHRS) and lysine 407.

It belongs to the enolase family. In terms of assembly, homodimer. Forms a complex at least composed of DegP, ENO and HSP70. Interacts with G-actin. Interacts (via the DKSLVK motif) with mammalian host PLG/plasminogen (present in the mosquito blood meal); the interaction occurs at the ookinete cell surface and is required for ookinete invasion of the mosquito midgut. Interacts with A.gambiae EBP; depending on the Plasmodium species, the interaction is either involved in ookinete invasion of the mosquito midgut (P.berghei) or is dispensable (P.falciparum). Requires Mg(2+) as cofactor.

It localises to the cytoplasm. The protein localises to the nucleus. The protein resides in the cytoskeleton. It is found in the cell surface. Its subcellular location is the cell membrane. It localises to the vacuole. The catalysed reaction is (2R)-2-phosphoglycerate = phosphoenolpyruvate + H2O. Its pathway is carbohydrate degradation; glycolysis; pyruvate from D-glyceraldehyde 3-phosphate: step 4/5. Glycolytic enzyme that catalyzes the conversion of 2-phosphoglycerate to phosphoenolpyruvate. In addition to glycolysis, involved in various processes such as parasite development and invasion. Plays an essential role during ookinete invasion of the mosquito vector midgut by mediating the interaction of the ookinete with the midgut epithelium and, further, by binding to mammalian host plasminogen in the blood meal, whose conversion to active plasmin promotes the invasion process. In Plasmodium falciparum (isolate FCR-3 / Gambia), this protein is Enolase.